A 218-amino-acid polypeptide reads, in one-letter code: N-alpha-acetyltransferase 11 (218 aa).

Residues 1–58 (MNIRNARPDDLMNMQHCNLLCLPENYQMKYYFYHGLSWPQLSYIAEDEDGKIVGYVLA) form an interaction with NAA15 region. An N-acetyltransferase domain is found at 1-152 (MNIRNARPDD…DAYAMKRDLS (152 aa)). Residues 175–218 (EETQGGTLPDAGEACLPKNPTSKDSGSSDSTDVQDSSEDLDSIS) are disordered. Residues 196-205 (SKDSGSSDST) show a composition bias toward low complexity. Over residues 209-218 (DSSEDLDSIS) the composition is skewed to acidic residues.

It belongs to the acetyltransferase family. ARD1 subfamily. In terms of assembly, component of the N-terminal acetyltransferase A (NatA) complex composed of NAA11 and NAA15. Interacts with HIF1A.

Its subcellular location is the cytoplasm. It is found in the nucleus. It carries out the reaction N-terminal glycyl-[protein] + acetyl-CoA = N-terminal N(alpha)-acetylglycyl-[protein] + CoA + H(+). The catalysed reaction is N-terminal L-alanyl-[protein] + acetyl-CoA = N-terminal N(alpha)-acetyl-L-alanyl-[protein] + CoA + H(+). The enzyme catalyses N-terminal L-seryl-[protein] + acetyl-CoA = N-terminal N(alpha)-acetyl-L-seryl-[protein] + CoA + H(+). It catalyses the reaction N-terminal L-valyl-[protein] + acetyl-CoA = N-terminal N(alpha)-acetyl-L-valyl-[protein] + CoA + H(+). It carries out the reaction N-terminal L-cysteinyl-[protein] + acetyl-CoA = N-terminal N(alpha)-acetyl-L-cysteinyl-[protein] + CoA + H(+). The catalysed reaction is N-terminal L-threonyl-[protein] + acetyl-CoA = N-terminal N(alpha)-acetyl-L-threonyl-[protein] + CoA + H(+). Functionally, displays alpha (N-terminal) acetyltransferase activity. Proposed alternative catalytic subunit of the N-terminal acetyltransferase A (NatA) complex. This Mus musculus (Mouse) protein is N-alpha-acetyltransferase 11 (Naa11).